A 241-amino-acid polypeptide reads, in one-letter code: 6-hydroxymethyl-7,8-dihydropterin pyrophosphokinase (241 aa).

The protein belongs to the archaeal 6-HMPDK family. It depends on Mg(2+) as a cofactor.

The catalysed reaction is 6-hydroxymethyl-7,8-dihydropterin + ATP = (7,8-dihydropterin-6-yl)methyl diphosphate + AMP + H(+). The protein operates within cofactor biosynthesis; 5,6,7,8-tetrahydromethanopterin biosynthesis. Its function is as follows. Catalyzes the transfer of diphosphate from ATP to 6-hydroxymethyl-7,8-dihydropterin (6-HMD), leading to 6-hydroxymethyl-7,8-dihydropterin diphosphate (6-HMDP). This chain is 6-hydroxymethyl-7,8-dihydropterin pyrophosphokinase, found in Methanocaldococcus jannaschii (strain ATCC 43067 / DSM 2661 / JAL-1 / JCM 10045 / NBRC 100440) (Methanococcus jannaschii).